The following is a 649-amino-acid chain: Threonine--tRNA ligase (649 aa).

In terms of domain architecture, TGS spans 1 to 61 (MIKITFPDGA…TQDGSIEIVT (61 aa)). Residues 242–540 (DHRKLGKELD…LIETYKGAFP (299 aa)) are catalytic. Positions 336, 387, and 517 each coordinate Zn(2+).

This sequence belongs to the class-II aminoacyl-tRNA synthetase family. In terms of assembly, homodimer. Requires Zn(2+) as cofactor.

The protein resides in the cytoplasm. It catalyses the reaction tRNA(Thr) + L-threonine + ATP = L-threonyl-tRNA(Thr) + AMP + diphosphate + H(+). In terms of biological role, catalyzes the attachment of threonine to tRNA(Thr) in a two-step reaction: L-threonine is first activated by ATP to form Thr-AMP and then transferred to the acceptor end of tRNA(Thr). Also edits incorrectly charged L-seryl-tRNA(Thr). The chain is Threonine--tRNA ligase from Streptococcus mutans serotype c (strain ATCC 700610 / UA159).